Here is a 257-residue protein sequence, read N- to C-terminus: AA9 family lytic polysaccharide monooxygenase U (257 aa).

Residues 1 to 19 form the signal peptide; sequence MKLYLAAFLGAVATPGAFA. Cu(2+) is bound at residue H20. N-linked (GlcNAc...) asparagine glycosylation is found at N29 and N71. Residues C74 and C194 are joined by a disulfide bond. Cu(2+) is bound at residue H113. N161 carries N-linked (GlcNAc...) asparagine glycosylation. O2 is bound at residue Q189. Cu(2+) is bound at residue Y191.

It belongs to the polysaccharide monooxygenase AA9 family. Requires Cu(2+) as cofactor.

The protein localises to the secreted. It carries out the reaction [(1-&gt;4)-beta-D-glucosyl]n+m + reduced acceptor + O2 = 4-dehydro-beta-D-glucosyl-[(1-&gt;4)-beta-D-glucosyl]n-1 + [(1-&gt;4)-beta-D-glucosyl]m + acceptor + H2O.. Its function is as follows. Lytic polysaccharide monooxygenase (LPMO) that depolymerizes crystalline and amorphous polysaccharides via the oxidation of scissile alpha- or beta-(1-4)-glycosidic bonds, yielding C1 and C4 oxidation products. Catalysis by LPMOs requires the reduction of the active-site copper from Cu(II) to Cu(I) by a reducing agent and H(2)O(2) or O(2) as a cosubstrate. Shows no activity on wheat arabinoxylan, konjac glucomannan, acetylated spruce galactoglucomannan, or cellopentaose. The chain is AA9 family lytic polysaccharide monooxygenase U from Thermothielavioides terrestris (strain ATCC 38088 / NRRL 8126) (Thielavia terrestris).